A 359-amino-acid chain; its full sequence is CMP-N-acetylneuraminate-poly-alpha-2,8-sialyltransferase (359 aa).

The Cytoplasmic segment spans residues methionine 1–arginine 7. The chain crosses the membrane as a helical; Signal-anchor for type II membrane protein span at residues tryptophan 8–tyrosine 20. The Lumenal portion of the chain corresponds to lysine 21–glutamine 359. Residues asparagine 50, asparagine 74, and asparagine 119 are each glycosylated (N-linked (GlcNAc...) asparagine). 2 disulfide bridges follow: cysteine 142–cysteine 292 and cysteine 156–cysteine 356. CMP-N-acetyl-beta-neuraminate contacts are provided by asparagine 147 and asparagine 170. N-linked (GlcNAc...) asparagine glycans are attached at residues asparagine 204 and asparagine 219. 4 residues coordinate CMP-N-acetyl-beta-neuraminate: serine 279, threonine 280, glycine 281, and tryptophan 301. Histidine 331 serves as the catalytic Proton donor/acceptor.

This sequence belongs to the glycosyltransferase 29 family. Autopolysialylated.

The protein resides in the golgi apparatus membrane. Its subcellular location is the secreted. The enzyme catalyses [N-acetyl-alpha-D-neuraminosyl-(2-&gt;8)](n) + CMP-N-acetyl-beta-neuraminate = [N-acetyl-alpha-D-neuraminosyl-(2-&gt;8)](n+1) + CMP + H(+). In terms of biological role, catalyzes the transfer of a sialic acid from a CMP-linked sialic acid donor onto a terminal alpha-2,3-, alpha-2,6-, or alpha-2,8-linked sialic acid of an N-linked glycan protein acceptor through alpha-2,8-linkages. Therefore, participates in polysialic acid synthesis on various sialylated N-acetyllactosaminyl oligosaccharides, including NCAM1 N-glycans, FETUB N-glycans and AHSG. It is noteworthy that alpha-2,3-linked sialic acid is apparently a better acceptor than alpha-2,6-linked sialic acid. This is CMP-N-acetylneuraminate-poly-alpha-2,8-sialyltransferase (ST8SIA4) from Pan troglodytes (Chimpanzee).